The primary structure comprises 108 residues: NADH dehydrogenase [ubiquinone] 1 alpha subcomplex subunit 8-A (108 aa).

CHCH domains are found at residues 28 to 69 (GIRC…LKDL) and 70 to 108 (HQRC…CPLK). Short sequence motifs (cx9C motif) lie at residues 31–41 (CMPENMAFLKC), 51–61 (CLEKGRDVTRC), and 73–83 (CPKEMDAYVGC). Disulfide bonds link cysteine 31–cysteine 61, cysteine 41–cysteine 51, cysteine 73–cysteine 105, and cysteine 83–cysteine 94. The short motif at 94 to 105 (CRKEQEAFEKVC) is the Cx10C motif element.

It belongs to the complex I NDUFA8 subunit family. Complex I is composed of at least 49 different subunits.

It is found in the mitochondrion. It localises to the mitochondrion intermembrane space. In terms of biological role, accessory subunit of the mitochondrial membrane respiratory chain NADH dehydrogenase (Complex I), that is believed not to be involved in catalysis. Complex I functions in the transfer of electrons from NADH to the respiratory chain. The immediate electron acceptor for the enzyme is believed to be ubiquinone. The protein is NADH dehydrogenase [ubiquinone] 1 alpha subcomplex subunit 8-A of Arabidopsis thaliana (Mouse-ear cress).